Consider the following 513-residue polypeptide: ATP synthase subunit alpha (513 aa).

Gly172–Thr179 serves as a coordination point for ATP.

The protein belongs to the ATPase alpha/beta chains family. F-type ATPases have 2 components, CF(1) - the catalytic core - and CF(0) - the membrane proton channel. CF(1) has five subunits: alpha(3), beta(3), gamma(1), delta(1), epsilon(1). CF(0) has three main subunits: a(1), b(2) and c(9-12). The alpha and beta chains form an alternating ring which encloses part of the gamma chain. CF(1) is attached to CF(0) by a central stalk formed by the gamma and epsilon chains, while a peripheral stalk is formed by the delta and b chains.

The protein resides in the cell inner membrane. It catalyses the reaction ATP + H2O + 4 H(+)(in) = ADP + phosphate + 5 H(+)(out). In terms of biological role, produces ATP from ADP in the presence of a proton gradient across the membrane. The alpha chain is a regulatory subunit. This chain is ATP synthase subunit alpha, found in Gluconacetobacter diazotrophicus (strain ATCC 49037 / DSM 5601 / CCUG 37298 / CIP 103539 / LMG 7603 / PAl5).